Reading from the N-terminus, the 151-residue chain is Arginine repressor (151 aa).

Belongs to the ArgR family.

The protein localises to the cytoplasm. It participates in amino-acid biosynthesis; L-arginine biosynthesis [regulation]. Its function is as follows. Regulates arginine biosynthesis genes. This Lachnospira eligens (strain ATCC 27750 / DSM 3376 / VPI C15-48 / C15-B4) (Eubacterium eligens) protein is Arginine repressor.